Consider the following 590-residue polypeptide: Zinc finger protein 703 (590 aa).

Over residues 1–14 (MSDSPAGSNPRTPE) the composition is skewed to polar residues. 3 disordered regions span residues 1 to 43 (MSDS…DPLR), 96 to 293 (CSQI…AGHV), and 341 to 366 (LVGG…LTGA). N-acetylserine is present on serine 2. Composition is skewed to low complexity over residues 27 to 37 (PAVPAAVSLLP), 128 to 139 (RSAPGAASAAAA), 171 to 189 (GSSS…PGDK), and 207 to 219 (APVS…SSPG). Residues 241–251 (ELDKKDQEPKP) are compositionally biased toward basic and acidic residues. A Phosphoserine modification is found at serine 252. Composition is skewed to gly residues over residues 260-273 (RGGG…GGAE) and 341-352 (LVGGQLSGGLGL). The C2H2-type zinc-finger motif lies at 456–484 (HSCNWVAASGPCDKRFATSEELLSHLRTH). Residue arginine 580 is modified to Omega-N-methylarginine.

The protein belongs to the Elbow/Noc family. Interacts with TLE4; increases transcriptional repression. Interacts with DCAF7 and PHB2. May interact with HSPD1. Expressed in mammary epithelium.

It localises to the nucleus. The protein resides in the cytoplasm. In terms of biological role, transcriptional corepressor which does not bind directly to DNA and may regulate transcription through recruitment of histone deacetylases to gene promoters. Regulates cell adhesion, migration and proliferation. May be required for segmental gene expression during hindbrain development. This is Zinc finger protein 703 (ZNF703) from Homo sapiens (Human).